The chain runs to 113 residues: Protein crumbs homolog 3 (113 aa).

The first 24 residues, 1–24 (MATPGLGVLLAFGLPMLPSGWSLT), serve as a signal peptide directing secretion. The segment at 23–44 (LTAPDPFTNSTTQPPGDESNGG) is disordered. The Extracellular segment spans residues 25–49 (APDPFTNSTTQPPGDESNGGLSSGA). The N-linked (GlcNAc...) asparagine glycan is linked to Asn31. Residues 50–70 (IVAITVVFSILGVLLIAVGLF) form a helical membrane-spanning segment. Over 71–113 (LLMRKLREKRQTEGTYRPSSEEQVGARAPPPPNLKLPPEERLI) the chain is Cytoplasmic. Residues 77–113 (REKRQTEGTYRPSSEEQVGARAPPPPNLKLPPEERLI) form an interaction with EPB41L5 region. Positions 80-113 (RQTEGTYRPSSEEQVGARAPPPPNLKLPPEERLI) are disordered. Residues 83 to 92 (EGTYRPSSEE) show a composition bias toward polar residues. The PDZ-binding motif lies at 110 to 113 (ERLI).

Component of a complex composed of CRB3, PALS1 and PATJ. Interacts (via C-terminus) with PALS1 (via PDZ domain). Interacts with PARD6A. Interacts (via intracellular domain) with EPB41L5. Interacts with WDR83. In terms of tissue distribution, expressed in the apical renal tubules (at protein level). Expressed in the retinal pigment epithelium.

It localises to the apical cell membrane. It is found in the cell junction. The protein resides in the tight junction. In terms of biological role, involved in the establishment of cell polarity in mammalian epithelial cells. Regulates the morphogenesis of tight junctions. Involved in promoting phosphorylation and cytoplasmic retention of transcriptional coactivators YAP1 and WWTR1/TAZ which leads to suppression of TGFB1-dependent transcription of target genes such as CCN2/CTGF, SERPINE1/PAI1, SNAI1/SNAIL1 and SMAD7. The polypeptide is Protein crumbs homolog 3 (Crb3) (Mus musculus (Mouse)).